The chain runs to 167 residues: Ubiquitin-like-conjugating enzyme ATG10 (167 aa).

The active-site Glycyl thioester intermediate is Cys133.

Belongs to the ATG10 family. Forms homooligomers. Interacts with ATG7 and ATG12.

It localises to the preautophagosomal structure membrane. Its function is as follows. E2-like enzyme required for the cytoplasm to vacuole transport (Cvt), autophagy and nucleophagy. Acts as an E2-like enzyme that catalyzes the conjugation of ATG12 to ATG5. ATG12 conjugation to ATG5 is required for proper localization of ATG8 to the preautophagosomal structure (PAS). Likely serves as an ATG5-recognition molecule. The polypeptide is Ubiquitin-like-conjugating enzyme ATG10 (ATG10) (Saccharomyces cerevisiae (strain ATCC 204508 / S288c) (Baker's yeast)).